The following is an 80-amino-acid chain: ATP synthase subunit c (80 aa).

A run of 2 helical transmembrane segments spans residues 11–31 and 53–73; these read MAAA…IGIL and FFVV…LGLY.

The protein belongs to the ATPase C chain family. F-type ATPases have 2 components, F(1) - the catalytic core - and F(0) - the membrane proton channel. F(1) has five subunits: alpha(3), beta(3), gamma(1), delta(1), epsilon(1). F(0) has three main subunits: a(1), b(2) and c(10-14). The alpha and beta chains form an alternating ring which encloses part of the gamma chain. F(1) is attached to F(0) by a central stalk formed by the gamma and epsilon chains, while a peripheral stalk is formed by the delta and b chains.

The protein localises to the cell inner membrane. F(1)F(0) ATP synthase produces ATP from ADP in the presence of a proton or sodium gradient. F-type ATPases consist of two structural domains, F(1) containing the extramembraneous catalytic core and F(0) containing the membrane proton channel, linked together by a central stalk and a peripheral stalk. During catalysis, ATP synthesis in the catalytic domain of F(1) is coupled via a rotary mechanism of the central stalk subunits to proton translocation. In terms of biological role, key component of the F(0) channel; it plays a direct role in translocation across the membrane. A homomeric c-ring of between 10-14 subunits forms the central stalk rotor element with the F(1) delta and epsilon subunits. The chain is ATP synthase subunit c from Erwinia tasmaniensis (strain DSM 17950 / CFBP 7177 / CIP 109463 / NCPPB 4357 / Et1/99).